The following is a 382-amino-acid chain: Lipid-A-disaccharide synthase (382 aa).

The protein belongs to the LpxB family.

It carries out the reaction 2-N,3-O-bis[(3R)-3-hydroxytetradecanoyl]-alpha-D-glucosaminyl 1-phosphate + UDP-2-N,3-O-bis[(3R)-3-hydroxytetradecanoyl]-alpha-D-glucosamine = lipid A disaccharide (E. coli) + UDP + H(+). The catalysed reaction is a lipid X + a UDP-2-N,3-O-bis[(3R)-3-hydroxyacyl]-alpha-D-glucosamine = a lipid A disaccharide + UDP + H(+). It functions in the pathway glycolipid biosynthesis; lipid IV(A) biosynthesis; lipid IV(A) from (3R)-3-hydroxytetradecanoyl-[acyl-carrier-protein] and UDP-N-acetyl-alpha-D-glucosamine: step 5/6. Its function is as follows. Condensation of UDP-2,3-diacylglucosamine and 2,3-diacylglucosamine-1-phosphate to form lipid A disaccharide, a precursor of lipid A, a phosphorylated glycolipid that anchors the lipopolysaccharide to the outer membrane of the cell. The chain is Lipid-A-disaccharide synthase from Escherichia coli O8 (strain IAI1).